The chain runs to 515 residues: SWI/SNF-related matrix-associated actin-dependent regulator of chromatin subfamily D member 1 (515 aa).

Positions 1–128 (MAARAGFQSV…RNHNAKKKKM (128 aa)) are disordered. Residues 14 to 23 (GGAGASGGAG) show a composition bias toward gly residues. Residues 43-167 (APGQGLYRSP…DQTIMRKRLD (125 aa)) are interaction with ESR1, NR1H4, NR3C1, PGR and SMARCA4. Residues Arg68 and Arg88 each carry the asymmetric dimethylarginine modification. Lys101 participates in a covalent cross-link: Glycyl lysine isopeptide (Lys-Gly) (interchain with G-Cter in SUMO2). A compositionally biased stretch (low complexity) spans 103 to 117 (PAPQQIKQVQQQAVQ). The tract at residues 168-474 (IQEALKRPIK…VMTDVVGNSE (307 aa)) is interaction with SMARCC1 and SMARCC2. The segment at 180 to 515 (RKLRIFISNT…LEQALGIRNT (336 aa)) is necessary for GR/NR3C1-mediated remodeling and transcription from chromatin; required for GR/NR3C1 interaction with the BRG1/SMARCA4 complex in vivo. Phosphothreonine is present on Thr203. N6-acetyllysine is present on Lys223. The SWIB/MDM2 domain maps to 290–367 (YQPPQFKLDP…PQRLHALLMP (78 aa)). The stretch at 412–440 (ASQQEIATLDNKIHETIETINQLKTQREF) forms a coiled coil.

It belongs to the SMARCD family. In terms of assembly, component of the multiprotein chromatin-remodeling complexes SWI/SNF: SWI/SNF-A (BAF), SWI/SNF-B (PBAF) and related complexes. The canonical complex contains a catalytic subunit (either SMARCA4/BRG1/BAF190A or SMARCA2/BRM/BAF190B), and at least SMARCE1, ACTL6A/BAF53, SMARCC1/BAF155, SMARCC2/BAF170, and SMARCB1/SNF5/BAF47. Other subunits specific to each of the complexes may also be present permitting several possible combinations developmentally and tissue specific. Component of the BAF complex, which includes at least actin (ACTB), ARID1A/BAF250A, ARID1B/BAF250B, SMARCA2/BRM, SMARCA4/BRG1/BAF190A, ACTL6A/BAF53, ACTL6B/BAF53B, SMARCE1/BAF57, SMARCC1/BAF155, SMARCC2/BAF170, SMARCB1/SNF5/INI1, and one or more SMARCD1/BAF60A, SMARCD2/BAF60B, or SMARCD3/BAF60C. In muscle cells, the BAF complex also contains DPF3. Component of neural progenitors-specific chromatin remodeling complex (npBAF complex) composed of at least, ARID1A/BAF250A or ARID1B/BAF250B, SMARCD1/BAF60A, SMARCD3/BAF60C, SMARCA2/BRM/BAF190B, SMARCA4/BRG1/BAF190A, SMARCB1/BAF47, SMARCC1/BAF155, SMARCE1/BAF57, SMARCC2/BAF170, PHF10/BAF45A, ACTL6A/BAF53A and actin. Component of neuron-specific chromatin remodeling complex (nBAF complex) composed of at least, ARID1A/BAF250A or ARID1B/BAF250B, SMARCD1/BAF60A, SMARCD3/BAF60C, SMARCA2/BRM/BAF190B, SMARCA4/BRG1/BAF190A, SMARCB1/BAF47, SMARCC1/BAF155, SMARCE1/BAF57, SMARCC2/BAF170, DPF1/BAF45B, DPF3/BAF45C, ACTL6B/BAF53B and actin. Component of the SWI/SNF-B (PBAF) chromatin remodeling complex, at least composed of SMARCA4/BRG1, SMARCB1/BAF47/SNF5, ACTL6A/BAF53A or ACTL6B/BAF53B, SMARCE1/BAF57, SMARCD1/BAF60A, SMARCD2/BAF60B, perhaps SMARCD3/BAF60C, SMARCC1/BAF155, SMARCC2/BAF170, PBRM1/BAF180, ARID2/BAF200 and actin (ACTB). Component of SWI/SNF (GBAF) subcomplex, which includes at least BICRA or BICRAL (mutually exclusive), BRD9, SS18, SMARCA2/BRM, SMARCA4/BRG1/BAF190A, ACTL6A/BAF53, SMARCC1/BAF155, and SMARCD1/BAF60A. Specifically interacts with the VDR heterodimer complex. Interacts with ESR1, NR3C1, NR1H4, PGR, SMARCA4, SMARCC1 and SMARCC2. Interacts with DPF2. Interacts with FOS, FOSB, FOSL1 and FOSL2.

Its subcellular location is the nucleus. Its function is as follows. Involved in transcriptional activation and repression of select genes by chromatin remodeling (alteration of DNA-nucleosome topology). Component of SWI/SNF chromatin remodeling complexes that carry out key enzymatic activities, changing chromatin structure by altering DNA-histone contacts within a nucleosome in an ATP-dependent manner. Belongs to the neural progenitors-specific chromatin remodeling complex (npBAF complex) and the neuron-specific chromatin remodeling complex (nBAF complex). During neural development a switch from a stem/progenitor to a postmitotic chromatin remodeling mechanism occurs as neurons exit the cell cycle and become committed to their adult state. The transition from proliferating neural stem/progenitor cells to postmitotic neurons requires a switch in subunit composition of the npBAF and nBAF complexes. As neural progenitors exit mitosis and differentiate into neurons, npBAF complexes which contain ACTL6A/BAF53A and PHF10/BAF45A, are exchanged for homologous alternative ACTL6B/BAF53B and DPF1/BAF45B or DPF3/BAF45C subunits in neuron-specific complexes (nBAF). The npBAF complex is essential for the self-renewal/proliferative capacity of the multipotent neural stem cells. The nBAF complex along with CREST plays a role regulating the activity of genes essential for dendrite growth. Has a strong influence on vitamin D-mediated transcriptional activity from an enhancer vitamin D receptor element (VDRE). May be a link between mammalian SWI-SNF-like chromatin remodeling complexes and the vitamin D receptor (VDR) heterodimer. Mediates critical interactions between nuclear receptors and the BRG1/SMARCA4 chromatin-remodeling complex for transactivation. Interacts with AKIRIN2. In Bos taurus (Bovine), this protein is SWI/SNF-related matrix-associated actin-dependent regulator of chromatin subfamily D member 1 (SMARCD1).